We begin with the raw amino-acid sequence, 910 residues long: Epithelial discoidin domain-containing receptor 1 (910 aa).

The first 19 residues, 1–19, serve as a signal peptide directing secretion; that stretch reads MGTGTLSSLLLLLLLVTIG. Residues 22–414 are Extracellular-facing; it reads DMKGHFDPAK…VAKAEGSPTA (393 aa). The F5/8 type C domain maps to 32–186; that stretch reads CRYALGMQDR…VCLRVELYGC (155 aa). Cystine bridges form between Cys-32–Cys-186 and Cys-75–Cys-178. The DS-like domain stretch occupies residues 193 to 368; the sequence is LSYTAPVGQT…LFSEISFISD (176 aa). 6 residues coordinate Ca(2+): Asn-212, Gln-231, Asp-234, Val-236, Tyr-254, and Tyr-256. The N-linked (GlcNAc...) asparagine glycan is linked to Asn-212. A glycan (N-linked (GlcNAc...) asparagine) is linked at Asn-261. An intrachain disulfide couples Cys-304 to Cys-349. Ca(2+) contacts are provided by Ser-361 and Glu-362. 2 N-linked (GlcNAc...) asparagine glycosylation sites follow: Asn-371 and Asn-391. Residues 415-435 traverse the membrane as a helical segment; that stretch reads ILIGCLVAIILLLLLIIALML. The Cytoplasmic segment spans residues 436–910; sequence WRLHWRRLLS…FLADDALNTV (475 aa). The disordered stretch occupies residues 467–494; the sequence is ILINNRPGPREPPPYQEPRPRGTPTHSA. The PPxY motif motif lies at 478-481; the sequence is PPPY. Phosphotyrosine; by autocatalysis occurs at positions 481, 510, and 517. Residues 607-902 enclose the Protein kinase domain; sequence LRFKEKLGEG…PPFSQLHRFL (296 aa). Residues 613 to 621 and Lys-652 each bind ATP; that span reads LGEGQFGEV. Tyr-737 is subject to Phosphotyrosine; by autocatalysis. Asp-763 serves as the catalytic Proton acceptor. Phosphotyrosine; by autocatalysis occurs at positions 789, 793, and 794.

It belongs to the protein kinase superfamily. Tyr protein kinase family. Insulin receptor subfamily. Homodimer. Interacts (via PPxY motif) with WWC1 (via WW domains) in a collagen-regulated manner. Forms a tripartite complex with WWC1 and PRKCZ, but predominantly in the absence of collagen. Interacts (tyrosine phosphorylated) with SHC1. Interacts with SRC. Interacts with MYH9. Interacts with CDH1. Interacts with PTPN11. Interacts with NCK2. Autophosphorylated in response to fibrillar collagen binding. Various embryonic and adult tissues; also proliferative zones of the developing brain; hippocampal neurons.

The protein resides in the cell membrane. The enzyme catalyses L-tyrosyl-[protein] + ATP = O-phospho-L-tyrosyl-[protein] + ADP + H(+). Tyrosine kinase that functions as a cell surface receptor for fibrillar collagen and regulates cell attachment to the extracellular matrix, remodeling of the extracellular matrix, cell migration, differentiation, survival and cell proliferation. Collagen binding triggers a signaling pathway that involves SRC and leads to the activation of MAP kinases. Regulates remodeling of the extracellular matrix by up-regulation of the matrix metalloproteinases MMP2, MMP7 and MMP9, and thereby facilitates cell migration and wound healing. Promotes smooth muscle cell migration, and thereby contributes to arterial wound healing. Also plays a role in tumor cell invasion. Phosphorylates PTPN11. Required for normal blastocyst implantation during pregnancy, for normal mammary gland differentiation and normal lactation. Required for normal ear morphology and normal hearing. This chain is Epithelial discoidin domain-containing receptor 1 (Ddr1), found in Rattus norvegicus (Rat).